A 577-amino-acid chain; its full sequence is Arginine--tRNA ligase (577 aa).

The 'HIGH' region signature appears at 122–132 (PNVAKEMHVGH).

The protein belongs to the class-I aminoacyl-tRNA synthetase family. As to quaternary structure, monomer.

It is found in the cytoplasm. It carries out the reaction tRNA(Arg) + L-arginine + ATP = L-arginyl-tRNA(Arg) + AMP + diphosphate. This chain is Arginine--tRNA ligase, found in Escherichia coli O127:H6 (strain E2348/69 / EPEC).